The following is a 408-amino-acid chain: Bifunctional polynucleotide phosphatase/kinase (408 aa).

Residues 1-38 form a disordered region; the sequence is MSSKKRKSPPQESLTSYFEKSSKSSKKYGSQNKDSDSS. At Ser8 the chain carries Phosphoserine. 2 stretches are compositionally biased toward polar residues: residues 10-19 and 28-38; these read PQESLTSYFE and YGSQNKDSDSS. 263–270 is an ATP binding site; the sequence is GFPSSGKS.

It in the N-terminal section; belongs to the DNA 3' phosphatase family.

It localises to the nucleus. The catalysed reaction is a 3'end (2'-deoxyribonucleotide 3'-phosphate)-DNA + H2O = a 3'-end 2'-deoxyribonucleotide-DNA + phosphate. It catalyses the reaction a 5'-end dephospho-2'-deoxyribonucleoside-DNA + ATP = a 5'-end 5'-phospho-2'-deoxyribonucleoside-DNA + ADP + H(+). Catalyzes the phosphorylation of DNA at 5'-hydroxyl termini and can dephosphorylate its 3'-phosphate termini. Has a role in the repair of breaks in single-stranded DNA. The sequence is that of Bifunctional polynucleotide phosphatase/kinase (pnk1) from Schizosaccharomyces pombe (strain 972 / ATCC 24843) (Fission yeast).